Reading from the N-terminus, the 385-residue chain is 4-hydroxy-3-methylbut-2-en-1-yl diphosphate synthase (flavodoxin) 1 (385 aa).

Residues Cys-280, Cys-283, Cys-315, and Glu-322 each coordinate [4Fe-4S] cluster.

It belongs to the IspG family. [4Fe-4S] cluster serves as cofactor.

The catalysed reaction is (2E)-4-hydroxy-3-methylbut-2-enyl diphosphate + oxidized [flavodoxin] + H2O + 2 H(+) = 2-C-methyl-D-erythritol 2,4-cyclic diphosphate + reduced [flavodoxin]. The protein operates within isoprenoid biosynthesis; isopentenyl diphosphate biosynthesis via DXP pathway; isopentenyl diphosphate from 1-deoxy-D-xylulose 5-phosphate: step 5/6. In terms of biological role, converts 2C-methyl-D-erythritol 2,4-cyclodiphosphate (ME-2,4cPP) into 1-hydroxy-2-methyl-2-(E)-butenyl 4-diphosphate. This is 4-hydroxy-3-methylbut-2-en-1-yl diphosphate synthase (flavodoxin) 1 from Streptomyces avermitilis (strain ATCC 31267 / DSM 46492 / JCM 5070 / NBRC 14893 / NCIMB 12804 / NRRL 8165 / MA-4680).